Here is a 734-residue protein sequence, read N- to C-terminus: MFGRVLGRETVQYFEALRREVQARRGAKNRAAEAQNGGEDDAKTAFLNFAIPTPQRHQTVVPGVGTLHDCCETAQIFASVARRLLFRSLSKWQSGEARERLDPASVEAYVDPKVRQALKTISFVEYSDDEARSCRNAYYSIMNTFDALRSSDAFHQVASFVARFSRLVDTSFNGADLDGDGQQASKRARVDVPTYGKQRGTLELFQKMILMHATYFIAAVILGDHADRIGAFLKMVFNTPEFSDATIRHFRQRATVFLVPRRHGKTWFLVPLIALALATFKGIKIGYTAHIRKATEPVFDEIGARLRQWFGNSPVDHVKGENISFSFPDGSKSTIVFASSHNTNGIRGQDFNLLFVDEANFIRPEAVQTIIGFLNQTNCKIIFVSSTNTGKASTSFLYNLKGAADDLLNVVTYICDEHMERVKAHTNATACSCYILNKPVFITMDGAMRNTAELFLPDSFMQEIIGGGNVSGAHRDEPVFTKTAQDRFLLYRPSTVANQDIMSSDLYVYVDPAFTTNAMASGTGVAVVGRYRSNWVVFGMEHFFLSALTGSSAELIARCVAQCLAQVFAIHKRPFDSVRVAVEGNSSQDAAVAIATNIQLELNTLRRADVVPMPGAVLFYHCTPHGSSVAYPFFLLQKQKTGAFDHFIKAFNSGSVLASQELVSNTVRLQTDPVEYLLTQMKNLTEVVTGTSETRVFTGKRNGASDDMLVALVMAVYLSSLPPTSDAFSSLPAQ.

The Nuclear localization signal signature appears at 184-190 (ASKRARV). Residues 259 to 266 (VPRRHGKT) carry the Walker A motif motif. Residues 353 to 358 (LLFVDE) carry the Walker B motif motif. Catalysis depends on E358, which acts as the For ATPase activity. Catalysis depends on for nuclease activity residues D511, E583, and D707.

It belongs to the herpesviridae TRM3 protein family. In terms of assembly, interacts with the terminase subunits TRM1 and TRM2. Interacts with portal protein.

Its subcellular location is the host nucleus. In terms of biological role, component of the molecular motor that translocates viral genomic DNA in empty capsid during DNA packaging. Forms a tripartite terminase complex together with TRM1 and TRM2 in the host cytoplasm. Once the complex reaches the host nucleus, it interacts with the capsid portal vertex. This portal forms a ring in which genomic DNA is translocated into the capsid. TRM3 carries an RNase H-like nuclease activity that plays an important role for the cleavage of concatemeric viral DNA into unit length genomes. The polypeptide is Tripartite terminase subunit 3 (Equus caballus (Horse)).